A 75-amino-acid polypeptide reads, in one-letter code: Accessory gland-specific peptide 57Da (75 aa).

Positions 1–19 are cleaved as a signal peptide; it reads MKFLALFVTLLVVLALVSA. The disordered stretch occupies residues 55–75; it reads AAPAAAPAAPEAGLADAPAES. Over residues 56–75 the composition is skewed to low complexity; it reads APAAAPAAPEAGLADAPAES.

Lumen fluid of male accessory glands, becomes seminal fluid.

Its subcellular location is the secreted. Functionally, transferred from male to female during mating and may affect egglaying and behavior after mating. The sequence is that of Accessory gland-specific peptide 57Da (Mst57Da) from Drosophila melanogaster (Fruit fly).